A 74-amino-acid chain; its full sequence is Ubiquitin-like protein FUBI (74 aa).

It belongs to the ubiquitin family.

The sequence is that of Ubiquitin-like protein FUBI (Fau) from Mus spicilegus (Steppe mouse).